A 362-amino-acid chain; its full sequence is Cobalt-precorrin-5B C(1)-methyltransferase (362 aa).

The protein belongs to the CbiD family.

The enzyme catalyses Co-precorrin-5B + S-adenosyl-L-methionine = Co-precorrin-6A + S-adenosyl-L-homocysteine. It participates in cofactor biosynthesis; adenosylcobalamin biosynthesis; cob(II)yrinate a,c-diamide from sirohydrochlorin (anaerobic route): step 6/10. Its function is as follows. Catalyzes the methylation of C-1 in cobalt-precorrin-5B to form cobalt-precorrin-6A. The protein is Cobalt-precorrin-5B C(1)-methyltransferase of Geobacter sulfurreducens (strain ATCC 51573 / DSM 12127 / PCA).